A 199-amino-acid polypeptide reads, in one-letter code: Shikimate kinase (199 aa).

ATP is bound at residue 14 to 19 (GSGKST). Residue Ser-18 coordinates Mg(2+). Substrate-binding residues include Asp-36, Arg-60, and Gly-82. Arg-120 is an ATP binding site. Substrate is bound at residue Arg-147. A disordered region spans residues 179–199 (YVRRAEKNQNSHSQTKKQSRK).

This sequence belongs to the shikimate kinase family. As to quaternary structure, monomer. Mg(2+) serves as cofactor.

The protein resides in the cytoplasm. It carries out the reaction shikimate + ATP = 3-phosphoshikimate + ADP + H(+). The protein operates within metabolic intermediate biosynthesis; chorismate biosynthesis; chorismate from D-erythrose 4-phosphate and phosphoenolpyruvate: step 5/7. Functionally, catalyzes the specific phosphorylation of the 3-hydroxyl group of shikimic acid using ATP as a cosubstrate. The polypeptide is Shikimate kinase (Chlorobium phaeobacteroides (strain BS1)).